The following is a 230-amino-acid chain: RNA chaperone ProQ (230 aa).

A disordered region spans residues 104-176 (AEAKARVQAQ…APRQNTEKLT (73 aa)). Residues 115–132 (AEQRAKKREAEGDKETSK) show a composition bias toward basic and acidic residues.

Belongs to the ProQ family.

Its subcellular location is the cytoplasm. RNA chaperone with significant RNA binding, RNA strand exchange and RNA duplexing activities. May regulate ProP activity through an RNA-based, post-transcriptional mechanism. This chain is RNA chaperone ProQ, found in Proteus mirabilis (strain HI4320).